A 116-amino-acid polypeptide reads, in one-letter code: Tachykinin-3 (116 aa).

A signal peptide spans 1 to 20 (MRSAMLFAAVLALSLAWTFG). Residues 21–79 (AACEEPQEQGGRLSKDSDLSLLPPPLLRRLYDSRSISLEGLLKVLSKASVGPKETSLPQ) constitute a propeptide that is removed on maturation. Methionine amide is present on Met-91. A disordered region spans residues 92 to 116 (GKRNSQPDTPADVVEENTPSFGVLK). Positions 95–116 (NSQPDTPADVVEENTPSFGVLK) are excised as a propeptide.

The protein belongs to the tachykinin family.

Its subcellular location is the secreted. Tachykinins are active peptides which excite neurons, evoke behavioral responses, are potent vasodilators and secretagogues, and contract (directly or indirectly) many smooth muscles. Is a critical central regulator of gonadal function. The chain is Tachykinin-3 (Tac3) from Rattus norvegicus (Rat).